A 365-amino-acid polypeptide reads, in one-letter code: Phosphate acyltransferase (365 aa).

This sequence belongs to the PlsX family. In terms of assembly, homodimer. Probably interacts with PlsY.

It is found in the cytoplasm. The enzyme catalyses a fatty acyl-[ACP] + phosphate = an acyl phosphate + holo-[ACP]. It functions in the pathway lipid metabolism; phospholipid metabolism. In terms of biological role, catalyzes the reversible formation of acyl-phosphate (acyl-PO(4)) from acyl-[acyl-carrier-protein] (acyl-ACP). This enzyme utilizes acyl-ACP as fatty acyl donor, but not acyl-CoA. This Picosynechococcus sp. (strain ATCC 27264 / PCC 7002 / PR-6) (Agmenellum quadruplicatum) protein is Phosphate acyltransferase.